The chain runs to 201 residues: Probable nicotinate-nucleotide adenylyltransferase (201 aa).

This sequence belongs to the NadD family.

The enzyme catalyses nicotinate beta-D-ribonucleotide + ATP + H(+) = deamido-NAD(+) + diphosphate. Its pathway is cofactor biosynthesis; NAD(+) biosynthesis; deamido-NAD(+) from nicotinate D-ribonucleotide: step 1/1. Its function is as follows. Catalyzes the reversible adenylation of nicotinate mononucleotide (NaMN) to nicotinic acid adenine dinucleotide (NaAD). This chain is Probable nicotinate-nucleotide adenylyltransferase, found in Clostridium botulinum (strain Langeland / NCTC 10281 / Type F).